The primary structure comprises 361 residues: MAGNTIGQLFRVTTFGESHGLALGCIVDGVPPGIPLTEADLQHDLDRRRPGTSRYTTQRREPDQVKILSGVFEGVTTGTSIGLLIENTDQRSQDYGAIKDLFRPGHADYTYEQKYGLRDYRGGGRSSARETAMRVAAGAIAKKYLAAKFGIVIRGCLTQMGDIPLAIKDWDQVEQNPFFCPDPDKIDALDELMRGLKKEGDSIGAKVTVVADGVPPGLGEPVFDRLDADIAHALMSINAVKGVEIGDGFEVVKLRGSENRDEITKAGFQSNHAGGILGGISSGQQIVANIALKPTSSITVPGHTINRFGEEVEMITKGRHDPCVGIRAVPIAEAMLAIVLMDHFMRQRAQNGDVTTTIPRW.

2 residues coordinate NADP(+): Arg48 and Arg54. FMN contacts are provided by residues 125-127 (RSS), 238-239 (NA), Gly278, 293-297 (KPTSS), and Arg319.

It belongs to the chorismate synthase family. Homotetramer. Requires FMNH2 as cofactor.

The enzyme catalyses 5-O-(1-carboxyvinyl)-3-phosphoshikimate = chorismate + phosphate. It functions in the pathway metabolic intermediate biosynthesis; chorismate biosynthesis; chorismate from D-erythrose 4-phosphate and phosphoenolpyruvate: step 7/7. In terms of biological role, catalyzes the anti-1,4-elimination of the C-3 phosphate and the C-6 proR hydrogen from 5-enolpyruvylshikimate-3-phosphate (EPSP) to yield chorismate, which is the branch point compound that serves as the starting substrate for the three terminal pathways of aromatic amino acid biosynthesis. This reaction introduces a second double bond into the aromatic ring system. The chain is Chorismate synthase from Klebsiella pneumoniae subsp. pneumoniae (strain ATCC 700721 / MGH 78578).